A 510-amino-acid polypeptide reads, in one-letter code: Aromatic-L-amino-acid decarboxylase (510 aa).

A compositionally biased stretch (polar residues) spans 1 to 17 (MSHIPISNTIPPKQTDG). The interval 1-29 (MSHIPISNTIPPKQTDGNGKANISPDKLD) is disordered. Position 117 (Thr-117) interacts with substrate. Ala-183, Ser-184, His-227, Asp-305, and Asn-334 together coordinate pyridoxal 5'-phosphate. His-227 is a substrate binding site. The residue at position 337 (Lys-337) is an N6-(pyridoxal phosphate)lysine. The disordered stretch occupies residues 358 to 384 (NAFNVDPLYLKHDMQGSAPDYRHWQIP).

It belongs to the group II decarboxylase family. As to quaternary structure, homodimer. Pyridoxal 5'-phosphate is required as a cofactor.

It catalyses the reaction L-dopa + H(+) = dopamine + CO2. The enzyme catalyses 5-hydroxy-L-tryptophan + H(+) = serotonin + CO2. In terms of biological role, catalyzes the decarboxylation of L-3,4-dihydroxyphenylalanine (L-DOPA) to dopamine and L-5-hydroxytryptophan (5-HTP) to serotonin. Catalyzes the formation of serotonin more efficiently than dopamine. Displays no activity to tyrosine. Variation in the synthesis of bioamines may be a factor contributing to natural variation in life span. This Drosophila simulans (Fruit fly) protein is Aromatic-L-amino-acid decarboxylase (Ddc).